Here is a 788-residue protein sequence, read N- to C-terminus: Endonuclease MutS2 (788 aa).

Position 332 to 339 (332 to 339 (GPNTGGKT)) interacts with ATP. A Smr domain is found at 713-788 (VDLRGMDAEE…GTGVTVVELK (76 aa)).

The protein belongs to the DNA mismatch repair MutS family. MutS2 subfamily. As to quaternary structure, homodimer. Binds to stalled ribosomes, contacting rRNA.

Endonuclease that is involved in the suppression of homologous recombination and thus may have a key role in the control of bacterial genetic diversity. In terms of biological role, acts as a ribosome collision sensor, splitting the ribosome into its 2 subunits. Detects stalled/collided 70S ribosomes which it binds and splits by an ATP-hydrolysis driven conformational change. Acts upstream of the ribosome quality control system (RQC), a ribosome-associated complex that mediates the extraction of incompletely synthesized nascent chains from stalled ribosomes and their subsequent degradation. Probably generates substrates for RQC. The protein is Endonuclease MutS2 of Clostridium botulinum (strain Okra / Type B1).